The following is a 229-amino-acid chain: Potassium/proton antiporter CemA (229 aa).

Helical transmembrane passes span 7 to 27 (FTPL…SFSV) and 107 to 127 (ILHF…SILG).

It belongs to the CemA family.

The protein resides in the plastid. Its subcellular location is the chloroplast inner membrane. The enzyme catalyses K(+)(in) + H(+)(out) = K(+)(out) + H(+)(in). In terms of biological role, contributes to K(+)/H(+) antiport activity by supporting proton efflux to control proton extrusion and homeostasis in chloroplasts in a light-dependent manner to modulate photosynthesis. Prevents excessive induction of non-photochemical quenching (NPQ) under continuous-light conditions. Indirectly promotes efficient inorganic carbon uptake into chloroplasts. In Solanum tuberosum (Potato), this protein is Potassium/proton antiporter CemA.